Consider the following 1159-residue polypeptide: Cation channel sperm-associated auxiliary subunit gamma (1159 aa).

An N-terminal signal peptide occupies residues 1-35 (MCGPAMFPAGPRWPRVRVLQVLWALLAVLLASRRL). Residues 36–1065 (WAIKDFEECT…IHGLPLSPKR (1030 aa)) are Extracellular-facing. 2 disulfides stabilise this stretch: Cys44/Cys105 and Cys159/Cys165. The N-linked (GlcNAc...) asparagine glycan is linked to Asn102. Residue Asn177 is glycosylated (N-linked (GlcNAc...) asparagine). Cysteines 288 and 343 form a disulfide. Asn355 is a glycosylation site (N-linked (GlcNAc...) asparagine). The cysteines at positions 394 and 402 are disulfide-linked. N-linked (GlcNAc...) asparagine glycosylation is found at Asn426 and Asn574. Intrachain disulfides connect Cys638/Cys860, Cys806/Cys834, Cys882/Cys1046, Cys909/Cys918, and Cys1010/Cys1016. A helical membrane pass occupies residues 1066-1087 (ALFILMVSLSVFVGLVIFYIAF). The Cytoplasmic portion of the chain corresponds to 1088–1159 (CLLWPLVVKG…KEAVERQLMT (72 aa)). Residues 1138–1159 (FSSRMTEDKAEPKEAVERQLMT) are disordered. The segment covering 1142-1159 (MTEDKAEPKEAVERQLMT) has biased composition (basic and acidic residues).

Belongs to the CATSPERG family. In terms of assembly, component of the CatSper complex or CatSpermasome composed of the core pore-forming members CATSPER1, CATSPER2, CATSPER3 and CATSPER4 as well as auxiliary members CATSPERB, CATSPERG, CATSPERD, CATSPERE, CATSPERZ, SCLO6C1, TMEM249, TMEM262 and EFCAB9. HSPA1 may be an additional auxiliary complex member. The core complex members CATSPER1, CATSPER2, CATSPER3 and CATSPER4 form a heterotetrameric channel. The auxiliary CATSPERB, CATSPERG, CATSPERD and CATSPERE subunits form a pavilion-like structure over the pore which stabilizes the complex through interactions with CATSPER4, CATSPER3, CATSPER1 and CATSPER2 respectively. TMEM262/CATSPERH interacts with CATSPERB, further stabilizing the complex. C2CD6/CATSPERT interacts at least with CATSPERD and is required for targeting the CatSper complex in the flagellar membrane.

It localises to the cell projection. The protein localises to the cilium. It is found in the flagellum membrane. Functionally, auxiliary component of the CatSper complex, a complex involved in sperm cell hyperactivation. Sperm cell hyperactivation is needed for sperm motility which is essential late in the preparation of sperm for fertilization. This is Cation channel sperm-associated auxiliary subunit gamma from Macaca fascicularis (Crab-eating macaque).